Reading from the N-terminus, the 210-residue chain is DNA replication complex GINS protein PSF3 (210 aa).

Belongs to the GINS3/PSF3 family. Component of the GINS complex which is a heterotetramer of gins1/psf1, gins2/psf2, gins3/psf3 and gins4/sld5. Component of the CMG helicase complex, composed of the mcm2-7 complex, the GINS complex and cdc45.

The protein resides in the nucleus. The protein localises to the chromosome. Functionally, required for correct functioning of the GINS complex, a complex that plays an essential role in the initiation of DNA replication, and progression of DNA replication forks. GINS complex is a core component of CDC45-MCM-GINS (CMG) helicase, the molecular machine that unwinds template DNA during replication, and around which the replisome is built. The protein is DNA replication complex GINS protein PSF3 of Xenopus laevis (African clawed frog).